A 488-amino-acid chain; its full sequence is Fumarate hydratase, mitochondrial (488 aa).

The transit peptide at 1 to 24 (MLRFTNCSCKTFVKSSYKLNIRRM) directs the protein to the mitochondrion. Substrate contacts are provided by residues 124–126 (SGT), 154–157 (HPNN), 164–166 (SSN), and threonine 212. Histidine 213 (proton donor/acceptor) is an active-site residue. Serine 343 is an active-site residue. Substrate contacts are provided by residues serine 344 and 349 to 351 (KVN). At threonine 428 the chain carries Phosphothreonine.

It belongs to the class-II fumarase/aspartase family. Fumarase subfamily. As to quaternary structure, homotetramer.

Its subcellular location is the mitochondrion matrix. The protein resides in the cytoplasm. The protein localises to the nucleus. It carries out the reaction (S)-malate = fumarate + H2O. The protein operates within carbohydrate metabolism; tricarboxylic acid cycle; (S)-malate from fumarate: step 1/1. Functionally, catalyzes the reversible stereospecific interconversion of fumarate to L-malate. In mitochondrion, catalyzes the hydration of fumarate to L-malate in the tricarboxylic acid (TCA) cycle to facilitate a transition step in the production of energy in the form of NADH. In cytoplasm and nucleus, involved in DNA repair in response to DNA damage: following DNA double-strand breaks (DSBs), translocates from the cytosol to the nucleus and promotes DNA repair by catalyzing the dehydration of L-malate to fumarate. The polypeptide is Fumarate hydratase, mitochondrial (Saccharomyces cerevisiae (strain ATCC 204508 / S288c) (Baker's yeast)).